A 679-amino-acid chain; its full sequence is Mitotic interactor and substrate of PLK1 (679 aa).

Serine 78 carries the post-translational modification Phosphoserine; by CDK1; in vitro. Disordered regions lie at residues 151–182 and 206–245; these read AVRK…TPLE and ANKG…GHVV. Residues 153–163 show a composition bias toward polar residues; sequence RKSSTVATLQG. Serine 156 is subject to Phosphoserine. 2 positions are modified to phosphothreonine; by CDK1; in vitro: threonine 164 and threonine 172. Threonine 179 carries the phosphothreonine modification. Serine 214 carries the phosphoserine; by CDK1; in vitro modification. Threonine 219 is subject to Phosphothreonine. A Phosphothreonine; by CDK1; in vitro modification is found at threonine 224. Serine 284 bears the Phosphoserine; by CDK1; in vitro mark. A Phosphothreonine; by CDK1; in vitro modification is found at threonine 287. Serine 348 carries the post-translational modification Phosphoserine. Residues 360 to 371 show a composition bias toward basic and acidic residues; sequence QREEDHRREGLH. The disordered stretch occupies residues 360 to 419; it reads QREEDHRREGLHVGRASTPDWVSEGPQPGLRRALSSDSILSPAPDARAADPAPEVRKVNR. At threonine 377 the chain carries Phosphothreonine; by CDK1; in vitro. Serine 382 carries the phosphoserine; by CDK1; in vitro modification. Serine 394, serine 395, and serine 397 each carry phosphoserine; by PLK1; in vitro. Serine 400 carries the post-translational modification Phosphoserine. Over residues 401–411 the composition is skewed to low complexity; it reads PAPDARAADPA. Position 430 is a phosphoserine (serine 430). The tract at residues 447 to 494 is disordered; sequence PSSLSTAEAKAATSPKATMSPRHLSESSGKPLSTKQEASKPPRGCPQA. Phosphoserine; by PLK1; in vitro is present on serine 471. A compositionally biased stretch (polar residues) spans 472 to 482; the sequence is ESSGKPLSTKQ. Serine 541 and serine 543 each carry phosphoserine. Residues 545-569 adopt a coiled-coil conformation; that stretch reads DLLERERESVLRREQEVAEERRNAL. Over residues 557–567 the composition is skewed to basic and acidic residues; that stretch reads REQEVAEERRN. 2 disordered regions span residues 557–598 and 622–643; these read REQE…ITGS and DPVD…GINP. Serine 575 is modified (phosphoserine; by CDK1; in vitro). Phosphothreonine is present on threonine 577. 2 positions are modified to phosphoserine; by PLK1; in vitro: serine 582 and serine 586. Low complexity predominate over residues 583–593; that stretch reads DQNSRSSSQAS. Serine 675 carries the post-translational modification Phosphoserine.

The protein belongs to the MISP family. In terms of assembly, associates with F-actin. Interacts with DCTN1; this interaction regulates DCTN1 distribution at the cell cortex. Interacts with PTK2/FAK and MAPRE1. Phosphorylated by CDK1 and PLK1. CDK1 is the priming kinase for PLK1 phosphorylation. Phosphorylation by PLK1 is required for proper spindle orientation at metaphase.

The protein resides in the cell junction. It is found in the focal adhesion. Its subcellular location is the cytoplasm. The protein localises to the cytoskeleton. It localises to the cell cortex. Plays a role in mitotic spindle orientation and mitotic progression. Regulates the distribution of dynactin at the cell cortex in a PLK1-dependent manner, thus stabilizing cortical and astral microtubule attachments required for proper mitotic spindle positioning. May link microtubules to the actin cytospkeleton and focal adhesions. May be required for directed cell migration and centrosome orientation. May also be necessary for proper stacking of the Golgi apparatus. This Homo sapiens (Human) protein is Mitotic interactor and substrate of PLK1.